The primary structure comprises 1364 residues: Serine protease EatA (1364 aa).

Residues 1–56 (MNKVFSLKYSFLAKGFIAVSELARRVSVKGKLKSASSIIISPITIAIVSYAPPSLA) form the signal peptide. Residues 57–307 (ATVNADISYQ…VVTTQDFLHQ (251 aa)) form the Peptidase S6 domain. Catalysis depends on charge relay system residues histidine 134, aspartate 162, and serine 267. The Autotransporter domain occupies 1098–1364 (DSQGDAGGWA…SINANFRYYF (267 aa)).

In terms of processing, cleaved to release the mature protein from the outer membrane.

It localises to the periplasm. The protein localises to the secreted. It is found in the cell surface. The protein resides in the cell outer membrane. Its activity is regulated as follows. Inhibited by phenylmethylsulfonyl fluoride. Functionally, autotransporter serine protease probably involved in virulence. The chain is Serine protease EatA (eatA) from Escherichia coli O78:H11 (strain H10407 / ETEC).